A 334-amino-acid chain; its full sequence is Phosphate acyltransferase (334 aa).

This sequence belongs to the PlsX family. In terms of assembly, homodimer. Probably interacts with PlsY.

It is found in the cytoplasm. It carries out the reaction a fatty acyl-[ACP] + phosphate = an acyl phosphate + holo-[ACP]. Its pathway is lipid metabolism; phospholipid metabolism. Its function is as follows. Catalyzes the reversible formation of acyl-phosphate (acyl-PO(4)) from acyl-[acyl-carrier-protein] (acyl-ACP). This enzyme utilizes acyl-ACP as fatty acyl donor, but not acyl-CoA. In Mycoplasmopsis agalactiae (strain NCTC 10123 / CIP 59.7 / PG2) (Mycoplasma agalactiae), this protein is Phosphate acyltransferase.